Consider the following 282-residue polypeptide: MKLIPRSSDISPGIDGICPGPFPPNGFTVLTDAAYGNGDCFGLYWPIGQEHKLPIVCETYHDEWRIVPAFSSIKKFEEWLEVNDDDPHENGISIEDQDFAANLFRVARKCLSTGRLDDALPLLQRATEQLPEVSEYWLALAIQYRRCKKTEAAAQAALNAYLGNWAFGVPDNKVIHLLSQAADVPNFQDDPVIQCIKEQGLDLSFGGTKENNNYPLMQMCVDTYFAQRKPLQALTLLHNYAWIMSSETTAFQERYDFNIDEWRAKFRQLCLEYFGDSRTQFT.

This is an uncharacterized protein from Escherichia coli (strain K12).